Consider the following 106-residue polypeptide: Large ribosomal subunit protein P1 (106 aa).

Residues 66 to 76 (AQPQATQAQPA) show a composition bias toward low complexity. A disordered region spans residues 66-106 (AQPQATQAQPAAEEKKEEKKEEEKKGPSEEEIASGLASLFG). Residues 77–93 (AEEKKEEKKEEEKKGPS) are compositionally biased toward basic and acidic residues.

This sequence belongs to the eukaryotic ribosomal protein P1/P2 family. In terms of assembly, part of the 50S ribosomal subunit. Homodimer, it forms part of the ribosomal stalk which helps the ribosome interact with GTP-bound translation factors. Forms a heptameric uL10/P0(P1)2(P1)2(P1)2 complex, where uL10/P0 forms an elongated spine to which the P1 dimers bind in a sequential fashion.

In terms of biological role, forms part of the ribosomal stalk, playing a central role in the interaction of the ribosome with GTP-bound translation factors. This Saccharolobus solfataricus (strain ATCC 35092 / DSM 1617 / JCM 11322 / P2) (Sulfolobus solfataricus) protein is Large ribosomal subunit protein P1.